Here is a 249-residue protein sequence, read N- to C-terminus: Methionine aminopeptidase (249 aa).

A substrate-binding site is contributed by His-77. A divalent metal cation contacts are provided by Asp-94, Asp-105, and His-168. His-175 serves as a coordination point for substrate. The a divalent metal cation site is built by Glu-201 and Glu-232.

It belongs to the peptidase M24A family. Methionine aminopeptidase type 1 subfamily. In terms of assembly, monomer. Co(2+) is required as a cofactor. It depends on Zn(2+) as a cofactor. The cofactor is Mn(2+). Fe(2+) serves as cofactor.

The enzyme catalyses Release of N-terminal amino acids, preferentially methionine, from peptides and arylamides.. In terms of biological role, removes the N-terminal methionine from nascent proteins. The N-terminal methionine is often cleaved when the second residue in the primary sequence is small and uncharged (Met-Ala-, Cys, Gly, Pro, Ser, Thr, or Val). Requires deformylation of the N(alpha)-formylated initiator methionine before it can be hydrolyzed. The protein is Methionine aminopeptidase of Clostridium perfringens (strain 13 / Type A).